The chain runs to 356 residues: uncharacterized protein (356 aa).

Transmembrane regions (helical) follow at residues 7-29 (LLSR…VSLY), 49-71 (YFLN…ISLI), 91-113 (ISPL…TFLL), 270-292 (LFYR…YLFF), 299-316 (QVIP…LVIL), and 329-348 (VLYS…KGVY).

The protein localises to the cell membrane. This is an uncharacterized protein from Aquifex aeolicus (strain VF5).